Reading from the N-terminus, the 559-residue chain is BTB/POZ domain-containing protein At5g47800 (559 aa).

The 69-residue stretch at 28-96 folds into the BTB domain; sequence NDLVIRINNT…CYDITINLSA (69 aa). In terms of domain architecture, NPH3 spans 199-476; that stretch reads DWWTEDISDL…VQALFFDQES (278 aa). Tyr417 bears the Phosphotyrosine mark. Positions 477–489 are enriched in low complexity; sequence GSKGASSRSESQE. 2 disordered regions span residues 477–502 and 524–559; these read GSKGASSRSESQELFTRGKETPTDEH and EGCKRGEEKTRSSTDPKKIVWKGTGSEHKHHISRDR. Composition is skewed to basic and acidic residues over residues 492-502 and 524-541; these read TRGKETPTDEH and EGCKRGEEKTRSSTDPKK.

The protein belongs to the NPH3 family.

Its pathway is protein modification; protein ubiquitination. Functionally, may act as a substrate-specific adapter of an E3 ubiquitin-protein ligase complex (CUL3-RBX1-BTB) which mediates the ubiquitination and subsequent proteasomal degradation of target proteins. The sequence is that of BTB/POZ domain-containing protein At5g47800 from Arabidopsis thaliana (Mouse-ear cress).